The following is a 407-amino-acid chain: MSRKSNKQSNPKRNYKNDNYFQENSYTMTNGFTKDKDGKPVEFKKYHRRRKDPYDYSSDEEPFDEQFQNEIKKNIQKNFKKFGNNNFNPNFNPNFNPNFVPEFSSGFPTGFGPDFNFRNQEDSDSEYSDECLTDECSDNYNKQSTDSNKPKSYYIRRKKSGSKKSIPKESIPQQSVIGEKISENFDNTVPIPQNDTTNSQPKSPKPSKSKSSSKSSKSNKSNKSSKSNKSSKSSKSKSNKHSKHKNKSDSSSDSDEKTHKHKDRRHRRGRCTYPQFYDFIPPMPEIPGMPEMPDFFNQTPFNPNNPNFNCGCNQSRPRKSSHDRHKHHNKHKHHNGHHNNPHYHNNNLNFNTNNQFPFDANNFNNQLFSNIFDPNNFNPQNYQTYSGCPSCNVPNSNYGPNNFRPNY.

Disordered regions lie at residues 1–64, 110–276, and 314–341; these read MSRK…EPFD, GFGP…YPQF, and QSRP…HNNP. The span at 7–32 shows a compositional bias: polar residues; the sequence is KQSNPKRNYKNDNYFQENSYTMTNGF. Residues 33–44 show a composition bias toward basic and acidic residues; the sequence is TKDKDGKPVEFK. Acidic residues predominate over residues 122–137; sequence DSDSEYSDECLTDECS. Composition is skewed to polar residues over residues 138-147 and 184-201; these read DNYNKQSTDS and NFDN…NSQP. Residues 209-231 are compositionally biased toward low complexity; it reads SKSSSKSSKSNKSNKSSKSNKSS. Basic residues predominate over residues 232 to 246; sequence KSSKSKSNKHSKHKN. Positions 247-258 are enriched in basic and acidic residues; it reads KSDSSSDSDEKT. 2 stretches are compositionally biased toward basic residues: residues 259-270 and 316-341; these read HKHKDRRHRRGR and RPRK…HNNP.

This is an uncharacterized protein from Acanthamoeba polyphaga mimivirus (APMV).